Consider the following 258-residue polypeptide: UPF0246 protein YaaA (258 aa).

The protein belongs to the UPF0246 family.

In Escherichia coli (strain SMS-3-5 / SECEC), this protein is UPF0246 protein YaaA.